A 556-amino-acid polypeptide reads, in one-letter code: (-)-alpha-pinene synthase (556 aa).

Positions 309, 313, 453, and 461 each coordinate Mg(2+). The DDXXD motif signature appears at 309–313 (DDMYD).

The protein belongs to the terpene synthase family. Tpsa subfamily. Mg(2+) is required as a cofactor. Mn(2+) serves as cofactor. In terms of tissue distribution, expressed in ripe fruits and roots. Not detected in vegetative tissues.

The protein localises to the cytoplasm. Its subcellular location is the cytosol. It carries out the reaction (2E)-geranyl diphosphate = (1S,5S)-alpha-pinene + diphosphate. It functions in the pathway secondary metabolite biosynthesis; terpenoid biosynthesis. In terms of biological role, monoterpene synthase catalyzing the production of (-)-alpha-pinene, beta-phellandrene and beta-myrcene as the major products. Unable to use farnesyl diphosphate as substrate. Exclusively expressed in the fruit of wild strawberries. Not detected in cultivated varieties. The polypeptide is (-)-alpha-pinene synthase (Fragaria vesca (Woodland strawberry)).